Reading from the N-terminus, the 696-residue chain is Polyphosphate kinase (696 aa).

Residue Asn-45 participates in ATP binding. Arg-373 and Arg-403 together coordinate Mg(2+). The region spanning 428–462 is the PLD phosphodiesterase domain; that stretch reads PGLKIHSKLLMISRREGDDIIRYAHIGTGNFHEKT. Residue His-433 is the Phosphohistidine intermediate of the active site. The ATP site is built by Tyr-466, Arg-562, and His-590.

It belongs to the polyphosphate kinase 1 (PPK1) family. Mg(2+) is required as a cofactor. Post-translationally, an intermediate of this reaction is the autophosphorylated ppk in which a phosphate is covalently linked to a histidine residue through a N-P bond.

The enzyme catalyses [phosphate](n) + ATP = [phosphate](n+1) + ADP. Its function is as follows. Catalyzes the reversible transfer of the terminal phosphate of ATP to form a long-chain polyphosphate (polyP). In Vibrio parahaemolyticus serotype O3:K6 (strain RIMD 2210633), this protein is Polyphosphate kinase.